The chain runs to 84 residues: Exodeoxyribonuclease 7 small subunit (84 aa).

The protein belongs to the XseB family. Heterooligomer composed of large and small subunits.

Its subcellular location is the cytoplasm. It catalyses the reaction Exonucleolytic cleavage in either 5'- to 3'- or 3'- to 5'-direction to yield nucleoside 5'-phosphates.. Bidirectionally degrades single-stranded DNA into large acid-insoluble oligonucleotides, which are then degraded further into small acid-soluble oligonucleotides. The protein is Exodeoxyribonuclease 7 small subunit of Yersinia pseudotuberculosis serotype O:3 (strain YPIII).